The chain runs to 246 residues: Vacuolar iron transporter 2 (246 aa).

Over 1 to 32 (MVKEFVQDEEKQRLLLDEHTEKHFTAGEVVRD) the chain is Cytoplasmic. Residues 33–53 (IIIGVSDGLTVPFALAAGLSG) traverse the membrane as a helical segment. Over 54–58 (ANAPS) the chain is Vacuolar. A helical membrane pass occupies residues 59 to 79 (ALVLTAGLAEVAAGAISMGLG). The Cytoplasmic portion of the chain corresponds to 80–164 (GYLAAKSDAD…PEPRRALMSA (85 aa)). The interval 86 to 161 (SDADHYHREL…LEKPEPRRAL (76 aa)) is cytoplasmic metal binding domain (MBD). E98, E101, E109, E112, M145, and E149 together coordinate Fe cation. Residues 165–185 (GTIALAYVVGGLVPLLPYMFV) traverse the membrane as a helical segment. The Vacuolar portion of the chain corresponds to 186 to 190 (PTADR). The helical transmembrane segment at 191 to 211 (AMATSVVVTLAALLFFGYVKG) threads the bilayer. Topologically, residues 212–218 (RFTGNRP) are cytoplasmic. The helical transmembrane segment at 219–239 (FISAFQTAVIGALASAAAFGM) threads the bilayer. The Vacuolar segment spans residues 240-246 (AKAVQSI).

This sequence belongs to the CCC1 family. In terms of assembly, homodimer. The dimeric interaction is mediated by both the transmembrane domains (TMDs) and the cytoplasmic metal binding domain (MBD). Expressed in leaf sheaths and at lower level in leaf blades.

It is found in the vacuole membrane. It carries out the reaction Fe(2+)(in) = Fe(2+)(out). Its function is as follows. Vacuolar iron transporter involved in the transfer of iron ions from the cytosol to the vacuole for intracellular iron storage. Vacuolar iron storage is required for seed embryo and seedling development. May be involved in the regulation of iron translocation between flag leaves and seeds. Can transport zinc ions from the cytosol to the vacuole. The sequence is that of Vacuolar iron transporter 2 from Oryza sativa subsp. japonica (Rice).